The chain runs to 644 residues: MKANGLDNDPARTRMERTDIDSEHPEAQPLLNNNHRTLGAGSANGPAVNEGRDIESDGFIKDSLFQIRKGYRIFIHNSKWILNILILINTIWLVTTLISDFFFNINILFGFSNRYASFNDLTLIFISIIANSFNLWFNKLGLYSALDYSLNVTLCVLTLFNLALTYLIKYTRQRIGFVGTFTYLWTSFSFFIGAILDWYLLFYNNSINEPLEERRIDDANISTFNENHTNSTENRDRSQYGSGSPTPTHRSQLVQNKHTLTEWVSIGFRNTIKFLILIFFALFTLNTLLTTLDTYRLTHKLPITVQSPSYEAFHYVDAAKTYQLHITCYGDVFDQENNTDLSENKKQPIILFEHGGYDTGYLSATWIEELYHLDKIQRYCLYDRPGYGLSDSPPAPISIAMVAESLRYALIKDAKIKGPFTTVGYDLGGLFTRVFTAKNVDIVDSMMLVESWHEELLLKNYIQRLLPPGRGDGDDGDDGNGNDGDGRNHDKTWLPSEIERHNEFRLWWKGIWSSLGWRLQTSWLLAHHGSKERIYGRDMKYQGRFLRSKFLESVTSSILSYRDVTNNAESLQNVKTSIVSSKEMVKKSALWGDWQRDLTKISHKTQEWKIVEGGHEIYKYGLGKQQTQEVLLRLIGELGKLTED.

A disordered region spans residues Met-1–Gly-39. Topologically, residues Met-1–Thr-90 are cytoplasmic. Residues Asp-9–Glu-26 show a composition bias toward basic and acidic residues. Residues Ser-22, Ser-56, and Ser-63 each carry the phosphoserine modification. A helical transmembrane segment spans residues Ile-91–Phe-111. Residues Ser-112 to Thr-122 lie on the Vacuolar side of the membrane. Residues Leu-123 to Tyr-143 form a helical membrane-spanning segment. The Cytoplasmic segment spans residues Ser-144–Asp-147. The chain crosses the membrane as a helical span at residues Tyr-148–Ile-168. At Lys-169–Arg-174 the chain is on the vacuolar side. A helical membrane pass occupies residues Ile-175–Ile-195. Over Leu-196–Thr-271 the chain is Cytoplasmic. The interval Asn-225–Ser-251 is disordered. The span at Gln-239–Ser-251 shows a compositional bias: polar residues. Residue Ser-244 is modified to Phosphoserine. A helical membrane pass occupies residues Ile-272–Leu-292. At Asp-293–Asp-644 the chain is on the vacuolar side. The AB hydrolase-1 domain occupies Pro-348–Lys-619. The disordered stretch occupies residues Gly-469–Thr-492.

The protein resides in the vacuole membrane. This is an uncharacterized protein from Saccharomyces cerevisiae (strain YJM789) (Baker's yeast).